Consider the following 390-residue polypeptide: Formate-dependent phosphoribosylglycinamide formyltransferase (390 aa).

N(1)-(5-phospho-beta-D-ribosyl)glycinamide-binding positions include 18–19 (EL) and Glu78. Residues Arg110, Lys151, 156–161 (SSGKGQ), 191–194 (EEFL), and Glu199 each bind ATP. Residues 115–305 (DLASKELNIK…EFELHLRAFL (191 aa)) form the ATP-grasp domain. Mg(2+)-binding residues include Glu264 and Glu276. N(1)-(5-phospho-beta-D-ribosyl)glycinamide-binding positions include Asp283, Lys353, and 360 to 361 (RR).

Belongs to the PurK/PurT family. As to quaternary structure, homodimer.

It catalyses the reaction N(1)-(5-phospho-beta-D-ribosyl)glycinamide + formate + ATP = N(2)-formyl-N(1)-(5-phospho-beta-D-ribosyl)glycinamide + ADP + phosphate + H(+). The protein operates within purine metabolism; IMP biosynthesis via de novo pathway; N(2)-formyl-N(1)-(5-phospho-D-ribosyl)glycinamide from N(1)-(5-phospho-D-ribosyl)glycinamide (formate route): step 1/1. Involved in the de novo purine biosynthesis. Catalyzes the transfer of formate to 5-phospho-ribosyl-glycinamide (GAR), producing 5-phospho-ribosyl-N-formylglycinamide (FGAR). Formate is provided by PurU via hydrolysis of 10-formyl-tetrahydrofolate. The polypeptide is Formate-dependent phosphoribosylglycinamide formyltransferase (Prochlorococcus marinus (strain MIT 9515)).